Here is a 462-residue protein sequence, read N- to C-terminus: Fumarate hydratase class II (462 aa).

Substrate-binding positions include 97–99 (SGT), 127–130 (HPND), 137–139 (SSN), and T185. H186 functions as the Proton donor/acceptor in the catalytic mechanism. S316 is a catalytic residue. Residues S317 and 322–324 (KVN) each bind substrate.

This sequence belongs to the class-II fumarase/aspartase family. Fumarase subfamily. Homotetramer.

Its subcellular location is the cytoplasm. It carries out the reaction (S)-malate = fumarate + H2O. It functions in the pathway carbohydrate metabolism; tricarboxylic acid cycle; (S)-malate from fumarate: step 1/1. Involved in the TCA cycle. Catalyzes the stereospecific interconversion of fumarate to L-malate. The chain is Fumarate hydratase class II from Bacillus anthracis.